Reading from the N-terminus, the 585-residue chain is Frizzled-10 (585 aa).

The signal sequence occupies residues 1–24 (MGPAAGNLVRAVLALCWLAEHCAG). Over 25–229 (ISSIDIERPG…DVYWSKDDKQ (205 aa)) the chain is Extracellular. The FZ domain occupies 33–154 (PGDGRCQPIE…NDPNYLCMEA (122 aa)). 5 disulfide bridges follow: cysteine 38/cysteine 99, cysteine 46/cysteine 92, cysteine 83/cysteine 121, cysteine 110/cysteine 151, and cysteine 114/cysteine 138. Asparagine 52 carries N-linked (GlcNAc...) asparagine glycosylation. The segment at 155–195 (PNNGSDEPPRGSSMLPPMFRPQRPSTGHDLQQHKDSLSRTS) is disordered. An N-linked (GlcNAc...) asparagine glycan is attached at asparagine 157. Residues 230–250 (FAVIWIAIWSILCFFSSAFTV) traverse the membrane as a helical segment. Over 251–265 (LTFLIDPQRFKYPER) the chain is Cytoplasmic. Residues 266–286 (PIIFLSMCYCVYSVGYIIRLF) traverse the membrane as a helical segment. The Extracellular segment spans residues 287–314 (SGAESIACDRDSGQLYVIQEGLESTGCT). A helical transmembrane segment spans residues 315–335 (IVFLVLYYFGMASSLWWVILT). Residues 336–355 (LTWFLAAGKKWGHEAIEANS) are Cytoplasmic-facing. A helical transmembrane segment spans residues 356–376 (SYFHLAAWAIPAVKTIMILVM). The Extracellular portion of the chain corresponds to 377–397 (RRVAGDELTGLCYVGSMDVNA). Residues 398–418 (LTGFVLIPLACYLIIGTSFIL) form a helical membrane-spanning segment. Residues 419-447 (SGFVALFHIRRVMKTGGENTDKLEKLMVR) are Cytoplasmic-facing. Residues 448 to 468 (IGVFSVLYTVPATCVIACYFY) traverse the membrane as a helical segment. Topologically, residues 469–506 (ERLNMDYWKIVASQQKCKMNNQTKNLDCMMNNSIPAVE) are extracellular. N-linked (GlcNAc...) asparagine glycosylation is found at asparagine 489 and asparagine 499. Residues 507-527 (IFMVKIFMLLVVGITSGMWIW) form a helical membrane-spanning segment. The Cytoplasmic segment spans residues 528–585 (TSKTLQSWQNVCSRRLKKRSRRKPASVITSSGIYKKPQHPQKTHLAKYESTLQPPTCV). Positions 530–535 (KTLQSW) match the Lys-Thr-X-X-X-Trp motif, mediates interaction with the PDZ domain of Dvl family members motif. The PDZ-binding signature appears at 583–585 (TCV).

It belongs to the G-protein coupled receptor Fz/Smo family. Interacts with WNT7A. Expressed in the dorsal ectoderm overlying the developing spinal cord.

The protein resides in the cell membrane. Functionally, receptor for Wnt proteins. Functions in the canonical Wnt/beta-catenin signaling pathway. Activation by WNT7A induces expression of beta-catenin target genes. The canonical Wnt/beta-catenin signaling pathway leads to the activation of disheveled proteins, inhibition of GSK-3 kinase, nuclear accumulation of beta-catenin and activation of Wnt target genes. A second signaling pathway involving PKC and calcium fluxes has been seen for some family members, but it is not yet clear if it represents a distinct pathway or if it can be integrated in the canonical pathway, as PKC seems to be required for Wnt-mediated inactivation of GSK-3 kinase. Both pathways seem to involve interactions with G-proteins. May be involved in transduction and intercellular transmission of polarity information during tissue morphogenesis and/or in differentiated tissues. In Gallus gallus (Chicken), this protein is Frizzled-10 (FZD10).